Consider the following 215-residue polypeptide: Methylthioribulose-1-phosphate dehydratase (215 aa).

Positions 103 and 105 each coordinate Zn(2+).

Belongs to the aldolase class II family. MtnB subfamily. Requires Zn(2+) as cofactor.

It catalyses the reaction 5-(methylsulfanyl)-D-ribulose 1-phosphate = 5-methylsulfanyl-2,3-dioxopentyl phosphate + H2O. It functions in the pathway amino-acid biosynthesis; L-methionine biosynthesis via salvage pathway; L-methionine from S-methyl-5-thio-alpha-D-ribose 1-phosphate: step 2/6. Functionally, catalyzes the dehydration of methylthioribulose-1-phosphate (MTRu-1-P) into 2,3-diketo-5-methylthiopentyl-1-phosphate (DK-MTP-1-P). This Sulfurihydrogenibium sp. (strain YO3AOP1) protein is Methylthioribulose-1-phosphate dehydratase.